The chain runs to 313 residues: C-type lectin domain-containing protein 162 (313 aa).

A signal peptide spans 1 to 17; sequence MNIFTLLFIYFLSDTVA. N-linked (GlcNAc...) asparagine glycosylation is found at Asn-28 and Asn-41. The C-type lectin domain maps to 28–145; sequence NATGCFQFFR…DAMFLPFVCE (118 aa). Residues Cys-49 and Cys-144 are joined by a disulfide bond. Asn-213 is a glycosylation site (N-linked (GlcNAc...) asparagine). The interval 244–313 is disordered; it reads VSQTETEMSR…RSKTIQISRG (70 aa). Basic and acidic residues predominate over residues 250–259; it reads EMSRSRKEKE. Residues Asn-279 and Asn-300 are each glycosylated (N-linked (GlcNAc...) asparagine). The segment covering 291–304 has biased composition (basic and acidic residues); sequence SKEKREREENETIR.

Its subcellular location is the secreted. The protein is C-type lectin domain-containing protein 162 (clec-162) of Caenorhabditis elegans.